The sequence spans 186 residues: Cytochrome c oxidase subunit 4, mitochondrial (186 aa).

A mitochondrion-targeting transit peptide spans 1 to 31; sequence MLLSRTAVAVARRATAAPALRRSIATTVVRC. Residues C118, H126, C142, and C145 each coordinate Zn(2+).

The protein belongs to the cytochrome c oxidase subunit 5B family. As to quaternary structure, component of the cytochrome c oxidase (complex IV, CIV), a multisubunit enzyme composed of 11 subunits. The complex is composed of a catalytic core of 3 subunits Cox1, Cox2 and Cox3, encoded in the mitochondrial DNA, and 8 supernumerary subunits Cox4, Cox5a/Cox5, Cox6, Cox7, Cox8, Cox7a/Cox9, Cox6b/Cox12 and Cox6a/Cox13, which are encoded in the nuclear genome. The complex exists as a monomer or a dimer and forms respiratory supercomplexes (SCs) in the inner mitochondrial membrane with NADH-ubiquinone oxidoreductase (complex I, CI) and ubiquinol-cytochrome c oxidoreductase (cytochrome b-c1 complex, complex III, CIII), resulting in various different assemblies (supercomplexes I(1)IV(1), I(1)III(3)IV(2), III(2)IV(1) and III(2)IV(2) as well as larger supercomplexes of compositions like I(1)III(2)IV(5-6)).

The protein resides in the mitochondrion inner membrane. The protein operates within energy metabolism; oxidative phosphorylation. Component of the cytochrome c oxidase, the last enzyme in the mitochondrial electron transport chain which drives oxidative phosphorylation. The respiratory chain contains 3 multisubunit complexes succinate dehydrogenase (complex II, CII), ubiquinol-cytochrome c oxidoreductase (cytochrome b-c1 complex, complex III, CIII) and cytochrome c oxidase (complex IV, CIV), that cooperate to transfer electrons derived from NADH and succinate to molecular oxygen, creating an electrochemical gradient over the inner membrane that drives transmembrane transport and the ATP synthase. Cytochrome c oxidase is the component of the respiratory chain that catalyzes the reduction of oxygen to water. Electrons originating from reduced cytochrome c in the intermembrane space (IMS) are transferred via the dinuclear copper A center (CU(A)) of Cox2 and heme A of Cox1 to the active site in Cox1, a binuclear center (BNC) formed by heme A3 and copper B (CU(B)). The BNC reduces molecular oxygen to 2 water molecules using 4 electrons from cytochrome c in the IMS and 4 protons from the mitochondrial matrix. In Neurospora crassa (strain ATCC 24698 / 74-OR23-1A / CBS 708.71 / DSM 1257 / FGSC 987), this protein is Cytochrome c oxidase subunit 4, mitochondrial (cox-4).